The following is a 310-amino-acid chain: tRNA dimethylallyltransferase (310 aa).

14 to 21 (GPTASGKT) serves as a coordination point for ATP. 16-21 (TASGKT) contacts substrate. An interaction with substrate tRNA region spans residues 39-42 (DSMQ).

It belongs to the IPP transferase family. As to quaternary structure, monomer. It depends on Mg(2+) as a cofactor.

It catalyses the reaction adenosine(37) in tRNA + dimethylallyl diphosphate = N(6)-dimethylallyladenosine(37) in tRNA + diphosphate. In terms of biological role, catalyzes the transfer of a dimethylallyl group onto the adenine at position 37 in tRNAs that read codons beginning with uridine, leading to the formation of N6-(dimethylallyl)adenosine (i(6)A). The chain is tRNA dimethylallyltransferase from Corynebacterium jeikeium (strain K411).